The sequence spans 126 residues: Large ribosomal subunit protein bL17 (126 aa).

It belongs to the bacterial ribosomal protein bL17 family. As to quaternary structure, part of the 50S ribosomal subunit. Contacts protein L32.

The protein is Large ribosomal subunit protein bL17 of Lawsonia intracellularis (strain PHE/MN1-00).